Reading from the N-terminus, the 303-residue chain is MTTPEYGSLRSDDDHWDIVSNVGYTALLVAGWRALHTTGPKPLVQDEYAKHFITASADPYLEGLLANPRTSEDGTAFPRLYGVQTRFFDDFFNCADEAGIRQAVIVAAGLDCRAYRLDWQPGTTVFEIDVPKVLEFKARVLSERGAVPKAHRVAVPADLRTDWPTPLTAAGFDPQRPSAWSVEGLLPYLTGDAQYALFARIDELCAPGSRVALGALGSRLDHEQLAALETAHPGVNMSGDVNFSALTYDDKTDPVEWLVEHGWAVDPVRSTLELQVGYGLTPPDVDVKIDSFMRSQYITAVRA.

Residues aspartate 129 and 158 to 159 each bind S-adenosyl-L-methionine; that span reads DL.

It belongs to the UPF0677 family.

Its function is as follows. Exhibits S-adenosyl-L-methionine-dependent methyltransferase activity. The sequence is that of Putative S-adenosyl-L-methionine-dependent methyltransferase Mb1931c from Mycobacterium bovis (strain ATCC BAA-935 / AF2122/97).